We begin with the raw amino-acid sequence, 333 residues long: DNA-directed RNA polymerase subunit alpha (333 aa).

The tract at residues 1-234 is alpha N-terminal domain (alpha-NTD); it reads MQISVNEFLT…QQLAAFVDLK (234 aa). Positions 248 to 333 are alpha C-terminal domain (alpha-CTD); the sequence is IDPILLRPVD…SLKKDDKATA (86 aa).

This sequence belongs to the RNA polymerase alpha chain family. As to quaternary structure, homodimer. The RNAP catalytic core consists of 2 alpha, 1 beta, 1 beta' and 1 omega subunit. When a sigma factor is associated with the core the holoenzyme is formed, which can initiate transcription.

It catalyses the reaction RNA(n) + a ribonucleoside 5'-triphosphate = RNA(n+1) + diphosphate. DNA-dependent RNA polymerase catalyzes the transcription of DNA into RNA using the four ribonucleoside triphosphates as substrates. The polypeptide is DNA-directed RNA polymerase subunit alpha (Pseudomonas fluorescens (strain Pf0-1)).